A 40-amino-acid chain; its full sequence is Photosystem I reaction center subunit IX (40 aa).

A helical transmembrane segment spans residues 12 to 34 (APVLLTAWMSLTAGMIIEIQRFF).

This sequence belongs to the PsaJ family.

Its subcellular location is the plastid. It is found in the chloroplast thylakoid membrane. May help in the organization of the PsaE and PsaF subunits. This chain is Photosystem I reaction center subunit IX, found in Emiliania huxleyi (Coccolithophore).